Here is a 260-residue protein sequence, read N- to C-terminus: MASLEVSRSPRRSRRELEVRSPRQNKYSVLLPTYNERENLPLIVWLLVKSFSESGINYEIIIIDDGSPDGTRDVAEQLEKIYGSDRILLRPREKKLGLGTAYIHGMKHATGNYIIIMDADLSHHPKFIPEFIRKQKEGNFDIVSGTRYKGNGGVYGWDLKRKIISRGANFLTQILLRPGASDLTGSFRLYRKEVLEKLIEKCVSKGYVFQMEMIVRARQLNYTIGEVPISFVDRVYGESKLGGNEIVSFLKGLLTLFATT.

Residue alanine 2 is modified to N-acetylalanine. Residues serine 3 and serine 9 each carry the phosphoserine modification. Residues proline 32, tyrosine 34, glutamate 36, isoleucine 63, aspartate 65, aspartate 118, alanine 119, aspartate 120, arginine 147, arginine 234, and lysine 240 each contribute to the GDP-alpha-D-mannose site. Residue aspartate 120 participates in Mg(2+) binding. Aspartate 120 serves as a coordination point for Mn(2+).

The protein belongs to the glycosyltransferase 2 family. As to quaternary structure, component of the dolichol-phosphate mannose (DPM) synthase complex composed of DPM1, DPM2 and DPM3; within the complex, directly interacts with DPM3. This interaction stabilizes DPM1. The cofactor is Mg(2+). It depends on Mn(2+) as a cofactor. Ca(2+) is required as a cofactor.

The protein localises to the endoplasmic reticulum. It carries out the reaction a di-trans,poly-cis-dolichyl phosphate + GDP-alpha-D-mannose = a di-trans,poly-cis-dolichyl beta-D-mannosyl phosphate + GDP. It participates in protein modification; protein glycosylation. Its function is as follows. Transfers mannose from GDP-mannose to dolichol monophosphate to form dolichol phosphate mannose (Dol-P-Man) which is the mannosyl donor in pathways leading to N-glycosylation, glycosyl phosphatidylinositol membrane anchoring, and O-mannosylation of proteins; catalytic subunit of the dolichol-phosphate mannose (DPM) synthase complex. The polypeptide is Dolichol-phosphate mannosyltransferase subunit 1 (DPM1) (Homo sapiens (Human)).